The primary structure comprises 66 residues: UPF0370 protein YpfN (66 aa).

Residues 4–24 (LAKYWWILVLVFLVGVLLNVI) form a helical membrane-spanning segment. The interval 39–66 (KPELPPHRDFNDKWDDEDGWPKKDQPKK) is disordered. The span at 42 to 66 (LPPHRDFNDKWDDEDGWPKKDQPKK) shows a compositional bias: basic and acidic residues.

The protein belongs to the UPF0370 family.

The protein resides in the cell membrane. This Salmonella paratyphi B (strain ATCC BAA-1250 / SPB7) protein is UPF0370 protein YpfN.